Reading from the N-terminus, the 191-residue chain is MIRISDAAQAHFAKLLANQEEGTQIRVFVINPGTPNAECGVSYCPPDAVEDTDTALKFEQLTAYVDELSAPYLEDAEIDFVTDQLGSQLTLKAPNAKMRKVSDDAPLMERVEYLLQSQINPQLAGHGGRVSLMEITDDGLAILQFGGGCNGCSMVDVTLKEGIEKQLLNEFPELKGVRDLTEHQRGEHSYY.

2 residues coordinate [4Fe-4S] cluster: Cys149 and Cys152.

The protein belongs to the NfuA family. In terms of assembly, homodimer. [4Fe-4S] cluster serves as cofactor.

Its function is as follows. Involved in iron-sulfur cluster biogenesis. Binds a 4Fe-4S cluster, can transfer this cluster to apoproteins, and thereby intervenes in the maturation of Fe/S proteins. Could also act as a scaffold/chaperone for damaged Fe/S proteins. The chain is Fe/S biogenesis protein NfuA from Klebsiella pneumoniae (strain 342).